A 181-amino-acid chain; its full sequence is TATA-box-binding protein (181 aa).

2 consecutive repeat copies span residues 7–83 (IVNV…IKEL) and 98–173 (VQNM…LTTL).

The protein belongs to the TBP family.

In terms of biological role, general factor that plays a role in the activation of archaeal genes transcribed by RNA polymerase. Binds specifically to the TATA box promoter element which lies close to the position of transcription initiation. In Methanococcus maripaludis (strain C7 / ATCC BAA-1331), this protein is TATA-box-binding protein.